We begin with the raw amino-acid sequence, 336 residues long: Peroxidase 20 (336 aa).

The first 24 residues, 1-24 (MEIKQKKVWLSLIVLYAITTSVLG), serve as a signal peptide directing secretion. Cystine bridges form between Cys39–Cys119, Cys72–Cys77, Cys125–Cys331, and Cys204–Cys239. His70 serves as the catalytic Proton acceptor. Residues Asp71, Val74, Gly76, Asp78, and Ser80 each coordinate Ca(2+). Residue Pro167 coordinates substrate. N-linked (GlcNAc...) asparagine glycosylation occurs at Asn170. Position 197 (His197) interacts with heme b. Position 198 (Thr198) interacts with Ca(2+). Ca(2+) is bound by residues Asp252, Thr255, and Asp260.

This sequence belongs to the peroxidase family. Classical plant (class III) peroxidase subfamily. It depends on heme b as a cofactor. The cofactor is Ca(2+).

It localises to the secreted. The catalysed reaction is 2 a phenolic donor + H2O2 = 2 a phenolic radical donor + 2 H2O. Removal of H(2)O(2), oxidation of toxic reductants, biosynthesis and degradation of lignin, suberization, auxin catabolism, response to environmental stresses such as wounding, pathogen attack and oxidative stress. These functions might be dependent on each isozyme/isoform in each plant tissue. Its function is as follows. May be implicated in the systemic acquired resistance response via the salicylic acid signal transduction pathway. The chain is Peroxidase 20 (PER20) from Arabidopsis thaliana (Mouse-ear cress).